The following is a 239-amino-acid chain: Large ribosomal subunit protein uL2 (239 aa).

It belongs to the universal ribosomal protein uL2 family.

It localises to the cytoplasm. This is Large ribosomal subunit protein uL2 (RPL8) from Encephalitozoon cuniculi (strain GB-M1) (Microsporidian parasite).